The chain runs to 490 residues: GTPase Der (490 aa).

In terms of domain architecture, EngA-type G 1 spans Met-1–Leu-165. GTP is bound by residues Gly-7 to Ser-14, Asp-54 to Val-58, and Asn-117 to Asp-120. The interval Leu-165 to Ser-184 is disordered. Over residues Glu-169–Glu-178 the composition is skewed to acidic residues. An EngA-type G 2 domain is found at Leu-227–Thr-400. GTP is bound by residues Gly-233–Ser-240, Asp-280–Leu-284, and Asn-345–Asp-348. The KH-like domain maps to Thr-401–Pro-485.

The protein belongs to the TRAFAC class TrmE-Era-EngA-EngB-Septin-like GTPase superfamily. EngA (Der) GTPase family. Associates with the 50S ribosomal subunit.

GTPase that plays an essential role in the late steps of ribosome biogenesis. This Chlamydia muridarum (strain MoPn / Nigg) protein is GTPase Der.